The sequence spans 293 residues: Glycine--tRNA ligase alpha subunit (293 aa).

The protein belongs to the class-II aminoacyl-tRNA synthetase family. In terms of assembly, tetramer of two alpha and two beta subunits.

The protein localises to the cytoplasm. The enzyme catalyses tRNA(Gly) + glycine + ATP = glycyl-tRNA(Gly) + AMP + diphosphate. This Oceanobacillus iheyensis (strain DSM 14371 / CIP 107618 / JCM 11309 / KCTC 3954 / HTE831) protein is Glycine--tRNA ligase alpha subunit.